The chain runs to 649 residues: Exoribonuclease 2 (649 aa).

The RNB domain maps to 190–517 (RKDLTDLDFI…NHRLLKSIIK (328 aa)). The S1 motif domain maps to 562-644 (NQKFNAEITD…KTRSIIAKPV (83 aa)).

This sequence belongs to the RNR ribonuclease family. RNase II subfamily.

It is found in the cytoplasm. It catalyses the reaction Exonucleolytic cleavage in the 3'- to 5'-direction to yield nucleoside 5'-phosphates.. In terms of biological role, involved in mRNA degradation. Hydrolyzes single-stranded polyribonucleotides processively in the 3' to 5' direction. The protein is Exoribonuclease 2 of Buchnera aphidicola subsp. Acyrthosiphon pisum (strain 5A).